The sequence spans 289 residues: Probable signal peptidase I (289 aa).

At 1–53 the chain is on the cytoplasmic side; that stretch reads MTETTDSVPEPPSDADQLQPKVSICGLDMPAEVSETAAEAAIGVSEPKKRSAL. Residues 54–74 traverse the membrane as a helical segment; it reads WEFAILAVIAIGLYYVMLTFV. The Extracellular segment spans residues 75-289; it reads ARPYLIPSES…VGSVNSQQGQ (215 aa). Residues Ser-84 and Lys-162 contribute to the active site.

This sequence belongs to the peptidase S26 family.

Its subcellular location is the cell membrane. The catalysed reaction is Cleavage of hydrophobic, N-terminal signal or leader sequences from secreted and periplasmic proteins.. This Mycobacterium leprae (strain TN) protein is Probable signal peptidase I (lepB).